Here is a 224-residue protein sequence, read N- to C-terminus: Small ribosomal subunit protein uS5 (224 aa).

The disordered stretch occupies residues 1–40 (MAEQPAGGQGAGDSRDSRGDRDSRGRRGDGGRGGRDRDGD). Over residues 13–40 (DSRDSRGDRDSRGRRGDGGRGGRDRDGD) the composition is skewed to basic and acidic residues. In terms of domain architecture, S5 DRBM spans 44–107 (YLERVVAINR…EEARKGFFRV (64 aa)).

It belongs to the universal ribosomal protein uS5 family. In terms of assembly, part of the 30S ribosomal subunit. Contacts proteins S4 and S8.

Functionally, with S4 and S12 plays an important role in translational accuracy. In terms of biological role, located at the back of the 30S subunit body where it stabilizes the conformation of the head with respect to the body. The polypeptide is Small ribosomal subunit protein uS5 (Mycolicibacterium paratuberculosis (strain ATCC BAA-968 / K-10) (Mycobacterium paratuberculosis)).